We begin with the raw amino-acid sequence, 88 residues long: Insulin-related peptide 4 (88 aa).

A signal peptide spans 1–19 (MKLTLIILLVVAYSWCSEA). A propeptide spanning residues 20 to 45 (QNEARVFCGRVLSERLAALCWGPNSV) is cleaved from the precursor. Arginine amide is present on R65. The propeptide occupies 69-88 (GLATECCDKACTVEELLSYC).

This sequence belongs to the insulin family. As to expression, DAGWWLTRGAARSLGGVR-amide: Expressed in corpora cardiaca (CC), corpora allata (CA), antennal lobe (AL) and gnathal ganglion (GNG) (at protein level). Expression in CC and CA detected in most animals, in AL and GNG in few animals (at protein level).

It is found in the secreted. In Agrotis ipsilon (Black cutworm moth), this protein is Insulin-related peptide 4.